A 437-amino-acid polypeptide reads, in one-letter code: GTPase Obg (437 aa).

One can recognise an Obg domain in the interval 2–160; that stretch reads SMFLDTAKVS…RQLELELKIL (159 aa). In terms of domain architecture, OBG-type G spans 161-338; it reads ADVGLVGFPS…LLEATAELLA (178 aa). GTP-binding positions include 167-174, 192-196, 214-217, 284-287, and 319-321; these read GFPSVGKS, FTTIV, DLPG, NKMD, and SSL. Mg(2+) contacts are provided by S174 and T194. An OCT domain is found at 359-437; it reads GFAAEEKAFE…IGKFEFEFVD (79 aa).

It belongs to the TRAFAC class OBG-HflX-like GTPase superfamily. OBG GTPase family. Monomer. The cofactor is Mg(2+).

Its subcellular location is the cytoplasm. Its function is as follows. An essential GTPase which binds GTP, GDP and possibly (p)ppGpp with moderate affinity, with high nucleotide exchange rates and a fairly low GTP hydrolysis rate. Plays a role in control of the cell cycle, stress response, ribosome biogenesis and in those bacteria that undergo differentiation, in morphogenesis control. The polypeptide is GTPase Obg (Streptococcus equi subsp. equi (strain 4047)).